The following is a 69-amino-acid chain: Light-harvesting protein B-1015 beta chain (69 aa).

Over 2-21 the chain is Cytoplasmic; that stretch reads ADLKPSLTGLTEEEAKEFHG. Positions 20 and 38 each coordinate a bacteriochlorophyll. The chain crosses the membrane as a helical span at residues 22 to 44; it reads IFVTSTVLYLATAVIVHYLVWTA. Topologically, residues 45–56 are periplasmic; that stretch reads RPWIAPIPKGWV. The propeptide occupies 57–69; sequence NLEGVQSALSYLV.

Belongs to the antenna complex beta subunit family. In terms of assembly, the core complex is formed by different alpha and beta chains, binding bacteriochlorophyll molecules, and arranged most probably in tetrameric structures disposed around the reaction center. The non-pigmented gamma chains may constitute additional components.

It localises to the cell inner membrane. Antenna complexes are light-harvesting systems, which transfer the excitation energy to the reaction centers. The polypeptide is Light-harvesting protein B-1015 beta chain (pufB) (Blastochloris viridis (Rhodopseudomonas viridis)).